Here is a 396-residue protein sequence, read N- to C-terminus: DNA polymerase IV (396 aa).

The region spanning 5 to 192 (IFHVDVNSAF…LPVGELFMVG (188 aa)) is the UmuC domain. Residues Asp-9 and Asp-111 each contribute to the Mg(2+) site. Residue Glu-112 is part of the active site.

Belongs to the DNA polymerase type-Y family. In terms of assembly, monomer. The cofactor is Mg(2+).

It localises to the cytoplasm. The catalysed reaction is DNA(n) + a 2'-deoxyribonucleoside 5'-triphosphate = DNA(n+1) + diphosphate. Poorly processive, error-prone DNA polymerase involved in untargeted mutagenesis. Copies undamaged DNA at stalled replication forks, which arise in vivo from mismatched or misaligned primer ends. These misaligned primers can be extended by PolIV. Exhibits no 3'-5' exonuclease (proofreading) activity. May be involved in translesional synthesis, in conjunction with the beta clamp from PolIII. This is DNA polymerase IV from Clostridium acetobutylicum (strain ATCC 824 / DSM 792 / JCM 1419 / IAM 19013 / LMG 5710 / NBRC 13948 / NRRL B-527 / VKM B-1787 / 2291 / W).